Consider the following 330-residue polypeptide: AH receptor-interacting protein (330 aa).

Ser-43 carries the post-translational modification Phosphoserine. In terms of domain architecture, PPIase FKBP-type spans 54 to 146; the sequence is RVRGKPMELI…DLDALQQNPQ (93 aa). TPR repeat units lie at residues 179 to 212, 231 to 264, and 265 to 298; these read VPVIHQEGNRLYREGHVKEAAAKYYDAIACLKNL, TPLLLNYCQCKLVAEEYYEVLDHCSSILNKYDDN, and VKAYFKRGKAHAAVWNAQQAQDDFAKVLQLDPAM.

In terms of assembly, interacts with RET in the pituitary gland; this interaction prevents the formation of the AIP-survivin complex.

It is found in the cytoplasm. Functionally, may play a positive role in AHR-mediated (aromatic hydrocarbon receptor) signaling, possibly by influencing its receptivity for ligand and/or its nuclear targeting. The polypeptide is AH receptor-interacting protein (AIP) (Bos taurus (Bovine)).